The chain runs to 236 residues: UPF0502 protein Bpro_3844 (236 aa).

It belongs to the UPF0502 family.

This is UPF0502 protein Bpro_3844 from Polaromonas sp. (strain JS666 / ATCC BAA-500).